The chain runs to 262 residues: Ribosomal RNA small subunit methyltransferase A (262 aa).

S-adenosyl-L-methionine-binding residues include His16, Leu18, Gly43, Glu64, Asp89, and Asn109.

The protein belongs to the class I-like SAM-binding methyltransferase superfamily. rRNA adenine N(6)-methyltransferase family. RsmA subfamily.

It localises to the cytoplasm. It carries out the reaction adenosine(1518)/adenosine(1519) in 16S rRNA + 4 S-adenosyl-L-methionine = N(6)-dimethyladenosine(1518)/N(6)-dimethyladenosine(1519) in 16S rRNA + 4 S-adenosyl-L-homocysteine + 4 H(+). In terms of biological role, specifically dimethylates two adjacent adenosines (A1518 and A1519) in the loop of a conserved hairpin near the 3'-end of 16S rRNA in the 30S particle. May play a critical role in biogenesis of 30S subunits. The protein is Ribosomal RNA small subunit methyltransferase A of Xanthomonas oryzae pv. oryzae (strain MAFF 311018).